The following is a 313-amino-acid chain: Biotin synthase (313 aa).

In terms of domain architecture, Radical SAM core spans 38-262; the sequence is REVQISTLLS…TMPHARVRLS (225 aa). Positions 53, 57, and 60 each coordinate [4Fe-4S] cluster. Positions 97, 128, 188, and 260 each coordinate [2Fe-2S] cluster.

The protein belongs to the radical SAM superfamily. Biotin synthase family. As to quaternary structure, homodimer. [4Fe-4S] cluster is required as a cofactor. The cofactor is [2Fe-2S] cluster.

It catalyses the reaction (4R,5S)-dethiobiotin + (sulfur carrier)-SH + 2 reduced [2Fe-2S]-[ferredoxin] + 2 S-adenosyl-L-methionine = (sulfur carrier)-H + biotin + 2 5'-deoxyadenosine + 2 L-methionine + 2 oxidized [2Fe-2S]-[ferredoxin]. It functions in the pathway cofactor biosynthesis; biotin biosynthesis; biotin from 7,8-diaminononanoate: step 2/2. Functionally, catalyzes the conversion of dethiobiotin (DTB) to biotin by the insertion of a sulfur atom into dethiobiotin via a radical-based mechanism. In Granulibacter bethesdensis (strain ATCC BAA-1260 / CGDNIH1), this protein is Biotin synthase.